The chain runs to 286 residues: Thiazole synthase (286 aa).

Lys122 (schiff-base intermediate with DXP) is an active-site residue. Residues Gly183, 209 to 210 (AG), and 231 to 232 (NT) each bind 1-deoxy-D-xylulose 5-phosphate.

The protein belongs to the ThiG family. As to quaternary structure, homotetramer. Forms heterodimers with either ThiH or ThiS.

It localises to the cytoplasm. It catalyses the reaction [ThiS sulfur-carrier protein]-C-terminal-Gly-aminoethanethioate + 2-iminoacetate + 1-deoxy-D-xylulose 5-phosphate = [ThiS sulfur-carrier protein]-C-terminal Gly-Gly + 2-[(2R,5Z)-2-carboxy-4-methylthiazol-5(2H)-ylidene]ethyl phosphate + 2 H2O + H(+). Its pathway is cofactor biosynthesis; thiamine diphosphate biosynthesis. In terms of biological role, catalyzes the rearrangement of 1-deoxy-D-xylulose 5-phosphate (DXP) to produce the thiazole phosphate moiety of thiamine. Sulfur is provided by the thiocarboxylate moiety of the carrier protein ThiS. In vitro, sulfur can be provided by H(2)S. This Synechococcus elongatus (strain ATCC 33912 / PCC 7942 / FACHB-805) (Anacystis nidulans R2) protein is Thiazole synthase.